The primary structure comprises 139 residues: Large ribosomal subunit protein bL21 (139 aa).

This sequence belongs to the bacterial ribosomal protein bL21 family. Part of the 50S ribosomal subunit. Contacts protein L20.

This protein binds to 23S rRNA in the presence of protein L20. This is Large ribosomal subunit protein bL21 from Prochlorococcus marinus (strain NATL1A).